A 604-amino-acid chain; its full sequence is Sulfite reductase [NADPH] flavoprotein alpha-component (604 aa).

The 139-residue stretch at 65–203 (VTILYGSQTG…AAGQWHADVL (139 aa)) folds into the Flavodoxin-like domain. FMN contacts are provided by residues 71–76 (SQTGNG), 118–121 (STHG), and 154–163 (LGDSSYEFFC). Residues 236-453 (QNPYSAEVLV…VEPNKHFRLP (218 aa)) enclose the FAD-binding FR-type domain. Residues threonine 324, leucine 358, 392 to 395 (RLYS), 410 to 412 (TVA), and 425 to 428 (GGAS) each bind FAD. Residues 524 to 525 (SR), 530 to 534 (KIYVQ), and aspartate 566 contribute to the NADP(+) site. Tyrosine 604 contacts FAD.

The protein belongs to the NADPH-dependent sulphite reductase flavoprotein subunit CysJ family. This sequence in the N-terminal section; belongs to the flavodoxin family. It in the C-terminal section; belongs to the flavoprotein pyridine nucleotide cytochrome reductase family. In terms of assembly, alpha(8)-beta(8). The alpha component is a flavoprotein, the beta component is a hemoprotein. Requires FAD as cofactor. The cofactor is FMN.

The enzyme catalyses hydrogen sulfide + 3 NADP(+) + 3 H2O = sulfite + 3 NADPH + 4 H(+). It functions in the pathway sulfur metabolism; hydrogen sulfide biosynthesis; hydrogen sulfide from sulfite (NADPH route): step 1/1. In terms of biological role, component of the sulfite reductase complex that catalyzes the 6-electron reduction of sulfite to sulfide. This is one of several activities required for the biosynthesis of L-cysteine from sulfate. The flavoprotein component catalyzes the electron flow from NADPH -&gt; FAD -&gt; FMN to the hemoprotein component. This is Sulfite reductase [NADPH] flavoprotein alpha-component from Shewanella sp. (strain MR-7).